The sequence spans 750 residues: Photosystem I P700 chlorophyll a apoprotein A1 (750 aa).

8 helical membrane-spanning segments follow: residues 70 to 93, 156 to 179, 195 to 219, 291 to 309, 346 to 369, 385 to 411, 433 to 455, and 531 to 549; these read VFSAHFGQLSIIFLWLSGMYFHGA, LYCTAIGALVFAALMLFAGWFHYH, LNHHLAGLLGLGSLSWAGHQVHVSL, IAHHHLAIAILFLIAGHMY, WHAQLSLNLAMLGSLTIVVAHHMY, LSLFTHHMWIGGFLIVGAAAHAAIFMV, AIISHLNWACIFLGFHSFGLYIH, and FLVHHIHAFTIHVTVLILL. Residues C573 and C582 each contribute to the [4Fe-4S] cluster site. Helical transmembrane passes span 589–610 and 664–686; these read HVFLGLFWMYNAISVVIFHFSW and LSAYGLFFLGAHFVWAFSLMFLF. H675 serves as a coordination point for chlorophyll a'. Chlorophyll a contacts are provided by M683 and Y691. Position 692 (W692) interacts with phylloquinone. The helical transmembrane segment at 724–744 threads the bilayer; the sequence is AVGVTHYLLGGIATTWAFFLA.

It belongs to the PsaA/PsaB family. The PsaA/B heterodimer binds the P700 chlorophyll special pair and subsequent electron acceptors. PSI consists of a core antenna complex that captures photons, and an electron transfer chain that converts photonic excitation into a charge separation. The eukaryotic PSI reaction center is composed of at least 11 subunits. It depends on P700 is a chlorophyll a/chlorophyll a' dimer, A0 is one or more chlorophyll a, A1 is one or both phylloquinones and FX is a shared 4Fe-4S iron-sulfur center. as a cofactor.

It localises to the plastid. Its subcellular location is the chloroplast thylakoid membrane. It carries out the reaction reduced [plastocyanin] + hnu + oxidized [2Fe-2S]-[ferredoxin] = oxidized [plastocyanin] + reduced [2Fe-2S]-[ferredoxin]. In terms of biological role, psaA and PsaB bind P700, the primary electron donor of photosystem I (PSI), as well as the electron acceptors A0, A1 and FX. PSI is a plastocyanin-ferredoxin oxidoreductase, converting photonic excitation into a charge separation, which transfers an electron from the donor P700 chlorophyll pair to the spectroscopically characterized acceptors A0, A1, FX, FA and FB in turn. Oxidized P700 is reduced on the lumenal side of the thylakoid membrane by plastocyanin. This chain is Photosystem I P700 chlorophyll a apoprotein A1, found in Nicotiana sylvestris (Wood tobacco).